Consider the following 210-residue polypeptide: Small ribosomal subunit protein uS5 (210 aa).

A compositionally biased stretch (polar residues) spans 1 to 11; it reads MTQPNTQTTPN. Positions 1–56 are disordered; that stretch reads MTQPNTQTTPNDVPAAAEGQHQEQQQQQRRGGGRERRGGGRRGDRRGQERDSEWQE. Residues 18-29 are compositionally biased toward low complexity; sequence EGQHQEQQQQQR. Positions 32–56 are enriched in basic and acidic residues; sequence GGRERRGGGRRGDRRGQERDSEWQE. Positions 54–117 constitute an S5 DRBM domain; it reads WQERVVQIRR…ADGKKHLVKV (64 aa).

Belongs to the universal ribosomal protein uS5 family. In terms of assembly, part of the 30S ribosomal subunit. Contacts proteins S4 and S8.

With S4 and S12 plays an important role in translational accuracy. Functionally, located at the back of the 30S subunit body where it stabilizes the conformation of the head with respect to the body. The chain is Small ribosomal subunit protein uS5 from Prochlorococcus marinus (strain MIT 9303).